The sequence spans 122 residues: Ribonuclease P protein component (122 aa).

Belongs to the RnpA family. In terms of assembly, consists of a catalytic RNA component (M1 or rnpB) and a protein subunit.

It catalyses the reaction Endonucleolytic cleavage of RNA, removing 5'-extranucleotides from tRNA precursor.. In terms of biological role, RNaseP catalyzes the removal of the 5'-leader sequence from pre-tRNA to produce the mature 5'-terminus. It can also cleave other RNA substrates such as 4.5S RNA. The protein component plays an auxiliary but essential role in vivo by binding to the 5'-leader sequence and broadening the substrate specificity of the ribozyme. This is Ribonuclease P protein component from Halorhodospira halophila (strain DSM 244 / SL1) (Ectothiorhodospira halophila (strain DSM 244 / SL1)).